A 189-amino-acid chain; its full sequence is Protein sisterless A (189 aa).

The interval 93-124 (DCRGSGSGSGSGSGSDVKDAQRQRAESCRKSR) is disordered. The span at 108–121 (DVKDAQRQRAESCR) shows a compositional bias: basic and acidic residues.

Homodimer. Interacts with dpn (via bHLH motif). Interacts with da (via bHLH motif). Interacts with Bap60. As to expression, localizes to all the embryonic nuclei until nuclear cycle 9, when expression ceases in the prepole cell nuclei. Associates with the somatic nuclei through cycle 10. By nuclear cycle 12, distributes uniformly in the somatic portion of the embryo and no longer associates with the nuclei. After early cycle 14 (beginning of cellularization) there is very little or no expression in the periphery of the embryo or in either the somatic or germ cells. In the yolk, accumulates at the nuclei from nuclear cycle 8 until 10-11 hours after fertilization.

The protein resides in the nucleus. Involved in sex determination and dosage compensation. Required for proper expression of Sxl in embryonic somatic cells. Also has an essential function in the yolk nuclei. Involved in endoderm migration and midgut formation. The polypeptide is Protein sisterless A (sisA) (Drosophila melanogaster (Fruit fly)).